We begin with the raw amino-acid sequence, 159 residues long: Ribosomal RNA large subunit methyltransferase H (159 aa).

S-adenosyl-L-methionine is bound by residues L76, G108, and 127–132 (FGLLTL).

The protein belongs to the RNA methyltransferase RlmH family. As to quaternary structure, homodimer.

Its subcellular location is the cytoplasm. It carries out the reaction pseudouridine(1915) in 23S rRNA + S-adenosyl-L-methionine = N(3)-methylpseudouridine(1915) in 23S rRNA + S-adenosyl-L-homocysteine + H(+). Its function is as follows. Specifically methylates the pseudouridine at position 1915 (m3Psi1915) in 23S rRNA. The sequence is that of Ribosomal RNA large subunit methyltransferase H from Streptococcus agalactiae serotype Ia (strain ATCC 27591 / A909 / CDC SS700).